Consider the following 510-residue polypeptide: NAD(P)H-quinone oxidoreductase subunit 2 A, chloroplastic (510 aa).

13 consecutive transmembrane segments (helical) span residues 24-44, 57-77, 99-119, 124-144, 149-169, 183-203, 227-247, 295-315, 323-343, 354-374, 395-415, 418-438, and 484-504; these read LLLF…GLIL, IPWL…ALLF, IFQF…VEYI, MAIT…MFLC, LITI…LSGY, YLLM…WLYG, PGIS…LSPA, WHLL…LIAI, MLAY…IVGD, YMLF…LFGL, ALSL…AGFF, LYLF…IGLL, and MIVC…IIAI.

Belongs to the complex I subunit 2 family. In terms of assembly, NDH is composed of at least 16 different subunits, 5 of which are encoded in the nucleus.

It is found in the plastid. It localises to the chloroplast thylakoid membrane. It carries out the reaction a plastoquinone + NADH + (n+1) H(+)(in) = a plastoquinol + NAD(+) + n H(+)(out). The enzyme catalyses a plastoquinone + NADPH + (n+1) H(+)(in) = a plastoquinol + NADP(+) + n H(+)(out). Its function is as follows. NDH shuttles electrons from NAD(P)H:plastoquinone, via FMN and iron-sulfur (Fe-S) centers, to quinones in the photosynthetic chain and possibly in a chloroplast respiratory chain. The immediate electron acceptor for the enzyme in this species is believed to be plastoquinone. Couples the redox reaction to proton translocation, and thus conserves the redox energy in a proton gradient. In Solanum bulbocastanum (Wild potato), this protein is NAD(P)H-quinone oxidoreductase subunit 2 A, chloroplastic.